A 114-amino-acid chain; its full sequence is Protein yippee-like (114 aa).

The 98-residue stretch at 14–111 (RTYSCVHCRA…IELAHMIKEN (98 aa)) folds into the Yippee domain. Residues Cys18, Cys21, Cys74, and Cys77 each coordinate Zn(2+).

It belongs to the yippee family.

Its function is as follows. Involved in regulating synaptic transmission in presynaptic neurons. In class IV dendritic arborization neurons (nociceptors), involved in regulating activation of their second-order neurons (SONs) and maintaining synaptic contact between nociceptors and their SONs. The sequence is that of Protein yippee-like from Drosophila melanogaster (Fruit fly).